We begin with the raw amino-acid sequence, 609 residues long: Forkhead box protein O (609 aa).

Disordered regions lie at residues 1-89 (MDGF…KNSS) and 181-263 (KSVR…SSCG). T43 is modified (phosphothreonine; by PKB/AKT1). A compositionally biased stretch (polar residues) spans 62 to 79 (TKASNQQLASGDPQQAMQ). Positions 80–89 (NANAAKKNSS) are enriched in low complexity. Residues 94 to 200 (WGNLSYADLI…ETSRYEKRRG (107 aa)) constitute a DNA-binding region (fork-head). Residue S189 is modified to Phosphoserine; by PKB/AKT1. Composition is skewed to polar residues over residues 220–229 (ATPSPSSSVS) and 254–263 (RASSNASSCG). S257 bears the Phosphoserine; by PKB/AKT1 mark. S260, S261, and S266 each carry phosphoserine. Disordered stretches follow at residues 321-365 (AASG…QGQG) and 384-411 (RDGL…DSLN). A compositionally biased stretch (pro residues) spans 327-339 (TQPPPPYQPPQQP). Over residues 388–397 (SPNSVTTTMS) the composition is skewed to polar residues.

As to quaternary structure, interacts with melt.

The protein resides in the cytoplasm. Its subcellular location is the nucleus. Its function is as follows. Transcription factor involved in the regulation of the insulin signaling pathway. Consistently activates both the downstream target Thor\d4EBP and the feedback control target InR. Involved in negative regulation of the cell cycle, modulating cell growth and proliferation. In response to cellular stresses, such as nutrient deprivation or increased levels of reactive oxygen species, foxo is activated and inhibits growth through the action of target genes such as Thor. Foxo activated in the adult fat body can regulate lifespan in adults; an insulin peptide itself may function as one secondary messenger of insulin-regulated aging. Also regulates Lip4, homolog of human acid lipases, thereby acting as a key modulator of lipid metabolism by insulin signaling and integrates insulin responses to glucose and lipid homeostasis. The polypeptide is Forkhead box protein O (Drosophila virilis (Fruit fly)).